The following is a 272-amino-acid chain: Orotidine 5'-phosphate decarboxylase (272 aa).

The active-site Proton donor is lysine 95.

The protein belongs to the OMP decarboxylase family. Type 2 subfamily.

The catalysed reaction is orotidine 5'-phosphate + H(+) = UMP + CO2. Its pathway is pyrimidine metabolism; UMP biosynthesis via de novo pathway; UMP from orotate: step 2/2. The sequence is that of Orotidine 5'-phosphate decarboxylase from Cupriavidus metallidurans (strain ATCC 43123 / DSM 2839 / NBRC 102507 / CH34) (Ralstonia metallidurans).